We begin with the raw amino-acid sequence, 389 residues long: tRNA (cytosine(72)-C(5))-methyltransferase (389 aa).

The PUA domain occupies 92 to 167 (LPVVVANKYA…LAVEVTLPKF (76 aa)). Residues 209-215 (AAAPGGK), Asp233, Arg238, Asp260, Asp277, and Tyr304 contribute to the S-adenosyl-L-methionine site. The active-site Nucleophile is the Cys327.

This sequence belongs to the class I-like SAM-binding methyltransferase superfamily. RsmB/NOP family.

It carries out the reaction cytidine(72) in tRNA + S-adenosyl-L-methionine = 5-methylcytidine(72) in tRNA + S-adenosyl-L-homocysteine + H(+). The enzyme catalyses cytidine(72) in tRNA(Thr) + S-adenosyl-L-methionine = 5-methylcytidine(72) in tRNA(Thr) + S-adenosyl-L-homocysteine + H(+). It catalyses the reaction cytidine(72) in tRNA(Cys) + S-adenosyl-L-methionine = 5-methylcytidine(72) in tRNA(Cys) + S-adenosyl-L-homocysteine + H(+). In terms of biological role, S-adenosyl-L-methionine-dependent methyltransferase that specifically methylates the C5 position of cytosine 72 in several tRNAs. This modification appears to slightly promote the thermal stability of P.horikoshii tRNAs, but does not affect their amino acid accepting activity. Four elements in the acceptor stems of tRNAs are essential for substrate recognition by this enzyme: the target site C72, the 3'-CCA terminus, U73 or G73, and the second base pair C2:G71. The chain is tRNA (cytosine(72)-C(5))-methyltransferase from Pyrococcus horikoshii (strain ATCC 700860 / DSM 12428 / JCM 9974 / NBRC 100139 / OT-3).